Here is a 300-residue protein sequence, read N- to C-terminus: Dihydroorotate dehydrogenase B (NAD(+)), catalytic subunit (300 aa).

FMN-binding positions include S20 and 44 to 45 (KS). Residues K44, 68-72 (NAMGL), and N122 each bind substrate. N122 contributes to the FMN binding site. C125 serves as the catalytic Nucleophile. K160 and I186 together coordinate FMN. 187-188 (NT) contributes to the substrate binding site. Residues G212, 238-239 (GG), and 260-261 (GT) each bind FMN.

It belongs to the dihydroorotate dehydrogenase family. Type 1 subfamily. Heterotetramer of 2 PyrK and 2 PyrD type B subunits. FMN is required as a cofactor.

The protein resides in the cytoplasm. The catalysed reaction is (S)-dihydroorotate + NAD(+) = orotate + NADH + H(+). The protein operates within pyrimidine metabolism; UMP biosynthesis via de novo pathway; orotate from (S)-dihydroorotate (NAD(+) route): step 1/1. Catalyzes the conversion of dihydroorotate to orotate with NAD(+) as electron acceptor. The chain is Dihydroorotate dehydrogenase B (NAD(+)), catalytic subunit (pyrD) from Pyrococcus furiosus (strain ATCC 43587 / DSM 3638 / JCM 8422 / Vc1).